A 122-amino-acid polypeptide reads, in one-letter code: Large ribosomal subunit protein uL14 (122 aa).

This sequence belongs to the universal ribosomal protein uL14 family. Part of the 50S ribosomal subunit. Forms a cluster with proteins L3 and L19. In the 70S ribosome, L14 and L19 interact and together make contacts with the 16S rRNA in bridges B5 and B8.

Functionally, binds to 23S rRNA. Forms part of two intersubunit bridges in the 70S ribosome. The sequence is that of Large ribosomal subunit protein uL14 from Chlorobaculum parvum (strain DSM 263 / NCIMB 8327) (Chlorobium vibrioforme subsp. thiosulfatophilum).